The following is a 467-amino-acid chain: Pancreatic lipase-related protein 3 (467 aa).

An N-terminal signal peptide occupies residues 1–17; it reads MLGIWIVAFLFFGTSRG. Cys21 and Cys27 are joined by a disulfide. Residue Asn74 is glycosylated (N-linked (GlcNAc...) asparagine). An intrachain disulfide couples Cys107 to Cys118. Asn125 is a glycosylation site (N-linked (GlcNAc...) asparagine). Ser168 (nucleophile) is an active-site residue. Asp191 functions as the Charge relay system in the catalytic mechanism. Residues Cys252 and Cys277 are joined by a disulfide bond. His279 (charge relay system) is an active-site residue. Cystine bridges form between Cys301-Cys312, Cys315-Cys320, and Cys451-Cys467. Residues 355–467 form the PLAT domain; sequence WRHKLSVKLS…PNILQNLKPC (113 aa).

The protein belongs to the AB hydrolase superfamily. Lipase family. In terms of tissue distribution, overexpressed in hepatocellular carcinoma.

It is found in the secreted. The enzyme catalyses a triacylglycerol + H2O = a diacylglycerol + a fatty acid + H(+). The protein is Pancreatic lipase-related protein 3 (PNLIPRP3) of Homo sapiens (Human).